The following is a 368-amino-acid chain: MSETAKKVIVGMSGGVDSSVSAWLLQQQGYQVEGLFMKNWEEDDGEEYCTAAADLADAQAVCDKLGIELHTVNFAAEYWDNVFELFLAEYKAGRTPNPDILCNKEIKFKAFLEFAAEDLGADYIATGHYVRRADVDGKSRLLRGLDSNKDQSYFLYTLSHEQIAQSLFPVGELEKPQVRKIAEDLGLVTAKKKDSTGICFIGERKFREFLGRYLPAQPGKIITVDGDEIGEHQGLMYHTLGQRKGLGIGGTKEGTEEPWYVVDKDVENNILIVAQGHEHPRLMSVGLIAQQLHWVDREPFTGTMRCTVKTRYRQTDIPCTVKALDDDRIEVIFDEPVAAVTPGQSAVFYNGEVCLGGGIIEQRLPLPV.

Residues 11 to 18 (GMSGGVDS) and Met37 contribute to the ATP site. Residues 97–99 (NPD) form an interaction with target base in tRNA region. The active-site Nucleophile is the Cys102. Cys102 and Cys199 are joined by a disulfide. Gly127 is a binding site for ATP. Residues 149-151 (KDQ) form an interaction with tRNA region. Residue Cys199 is the Cysteine persulfide intermediate of the active site. The segment at 311-312 (RY) is interaction with tRNA.

It belongs to the MnmA/TRMU family. Interacts with TusE.

The protein resides in the cytoplasm. It catalyses the reaction S-sulfanyl-L-cysteinyl-[protein] + uridine(34) in tRNA + AH2 + ATP = 2-thiouridine(34) in tRNA + L-cysteinyl-[protein] + A + AMP + diphosphate + H(+). Catalyzes the 2-thiolation of uridine at the wobble position (U34) of tRNA(Lys), tRNA(Glu) and tRNA(Gln), leading to the formation of s(2)U34, the first step of tRNA-mnm(5)s(2)U34 synthesis. Sulfur is provided by IscS, via a sulfur-relay system. Binds ATP and its substrate tRNAs. This is tRNA-specific 2-thiouridylase MnmA from Escherichia coli (strain SMS-3-5 / SECEC).